The primary structure comprises 323 residues: Methenyltetrahydromethanopterin cyclohydrolase (323 aa).

Belongs to the MCH family.

It localises to the cytoplasm. The enzyme catalyses 5,10-methenyl-5,6,7,8-tetrahydromethanopterin + H2O = N(5)-formyl-5,6,7,8-tetrahydromethanopterin + H(+). It functions in the pathway one-carbon metabolism; methanogenesis from CO(2); 5,10-methenyl-5,6,7,8-tetrahydromethanopterin from CO(2): step 3/3. Its function is as follows. Catalyzes the reversible interconversion of 5-formyl-H(4)MPT to methenyl-H(4)MPT(+). The protein is Methenyltetrahydromethanopterin cyclohydrolase of Methanobrevibacter smithii (strain ATCC 35061 / DSM 861 / OCM 144 / PS).